The sequence spans 886 residues: Alanine--tRNA ligase (886 aa).

Residues His-564, His-568, Cys-666, and His-670 each contribute to the Zn(2+) site.

The protein belongs to the class-II aminoacyl-tRNA synthetase family. It depends on Zn(2+) as a cofactor.

The protein localises to the cytoplasm. The enzyme catalyses tRNA(Ala) + L-alanine + ATP = L-alanyl-tRNA(Ala) + AMP + diphosphate. Catalyzes the attachment of alanine to tRNA(Ala) in a two-step reaction: alanine is first activated by ATP to form Ala-AMP and then transferred to the acceptor end of tRNA(Ala). Also edits incorrectly charged Ser-tRNA(Ala) and Gly-tRNA(Ala) via its editing domain. The chain is Alanine--tRNA ligase from Prochlorococcus marinus (strain AS9601).